Here is a 115-residue protein sequence, read N- to C-terminus: Large ribosomal subunit protein bL20c (115 aa).

It belongs to the bacterial ribosomal protein bL20 family.

It is found in the plastid. It localises to the chloroplast. Its function is as follows. Binds directly to 23S ribosomal RNA and is necessary for the in vitro assembly process of the 50S ribosomal subunit. It is not involved in the protein synthesizing functions of that subunit. This chain is Large ribosomal subunit protein bL20c, found in Chlorokybus atmophyticus (Soil alga).